Reading from the N-terminus, the 421-residue chain is MWYHRLSHLHSRLQDLLKGGVIYPALPQPNFKSLLPLAVHWHHTASKSLTCAWQQHEDHFELKYANTVMRFDYVWLRDHCRSASCYNSKTHQRSLDTASVDLCIKPKTIRLDETTLFFTWPDGHVTKYDLNWLVKNSYEGQKQKVIQPRILWNAEIYQQAQVPSVDCQSFLETNEGLKKFLQNFLLYGIAFVENVPPTQEHTEKLAERISLIRETIYGRMWYFTSDFSRGDTAYTKLALDRHTDTTYFQEPCGIQVFHCLKHEGTGGRTLLVDGFYAAEQVLQKAPEEFELLSKVPLKHEYIEDVGECHNHMIGIGPVLNIYPWNKELYLIRYNNYDRAVINTVPYDVVHRWYTAHRTLTIELRRPENEFWVKLKPGRVLFIDNWRVLHGRECFTGYRQLCGCYLTRDDVLNTARLLGLQA.

The N-terminal 15 residues, 1–15 (MWYHRLSHLHSRLQD), are a transit peptide targeting the mitochondrion. N6-acetyllysine occurs at positions 179 and 236. Fe cation is bound by residues H242, D244, and H389.

Belongs to the gamma-BBH/TMLD family. In terms of assembly, homodimer. Fe(2+) is required as a cofactor. The cofactor is L-ascorbate. In terms of tissue distribution, all isoforms, but isoform 8, are widely expressed in adult and fetal tissues. Isoform 8 is restricted to heart and skeletal muscle.

Its subcellular location is the mitochondrion matrix. It carries out the reaction N(6),N(6),N(6)-trimethyl-L-lysine + 2-oxoglutarate + O2 = (3S)-3-hydroxy-N(6),N(6),N(6)-trimethyl-L-lysine + succinate + CO2. Its pathway is amine and polyamine biosynthesis; carnitine biosynthesis. Converts trimethyllysine (TML) into hydroxytrimethyllysine (HTML). In Homo sapiens (Human), this protein is Trimethyllysine dioxygenase, mitochondrial (TMLHE).